Reading from the N-terminus, the 503-residue chain is 5'-3' exonuclease PLD4 (503 aa).

Topologically, residues 1-36 are cytoplasmic; sequence MDKKKEHPEMRIPLQTAVEVSDWPCSTSHDPHSGLG. A signal-anchor for type II membrane protein membrane pass occupies residues 37-57; sequence MVLGMLAVLGLSSVTLILFLW. The Lumenal portion of the chain corresponds to 58 to 503; that stretch reads QGATSFTSHR…RQVPSQDCVW (446 aa). N-linked (GlcNAc...) asparagine glycans are attached at residues N89, N148, and N169. A disulfide bridge links C92 with C248. The region spanning 207–234 is the PLD phosphodiesterase 1 domain; sequence TGGVLHSKFWVVDGRHIYVGSANMDWRS. Residues H212, K214, and D219 contribute to the active site. Residue H212 is the Proton donor of the active site. 4 N-linked (GlcNAc...) asparagine glycosylation sites follow: N247, N279, N415, and N425. Cysteines 377 and 501 form a disulfide. The region spanning 421 to 447 is the PLD phosphodiesterase 2 domain; sequence FSRVNHSKFMVTDKTAYVGTSNWSEDY. Residues H426, K428, and D433 contribute to the active site. The active-site Nucleophile is the H426. N-linked (GlcNAc...) asparagine glycosylation occurs at N442.

It belongs to the phospholipase D family. Highly N-glycosylated. Enriched in the white matter of early postnatal brains, as well as in splenic marginal zone cells. Highly expressed in dendritic cells (DCs) and other myeloid cells, with lower expression in B cell.

The protein resides in the endoplasmic reticulum membrane. The protein localises to the golgi apparatus. Its subcellular location is the trans-Golgi network membrane. It is found in the nucleus. It localises to the early endosome. The protein resides in the cytoplasmic vesicle. The protein localises to the phagosome. Its subcellular location is the lysosome. It catalyses the reaction Exonucleolytic cleavage in the 5'- to 3'-direction to yield nucleoside 3'-phosphates.. It carries out the reaction a 5'-end 5'-dephospho-ribonucleotidyl-ribonucleotide-RNA + H2O = a ribonucleoside 3'-phosphate + a 5'-end dephospho-ribonucleoside-RNA + H(+). The catalysed reaction is a ribonucleoside 3'-phosphate-2'-3'-cyclophospho-GMP + H2O = a ribonucleoside 3'-phosphate + 2',3'-cyclophospho-GMP + H(+). The enzyme catalyses a 5'-end 5'-dephospho-2'-deoxyribonucleotidyl-2'-deoxyribonucleotide in single-stranded DNA + H2O = a 5'-end dephospho-2'-deoxyribonucleoside in single-stranded DNA + a 2'-deoxyribonucleoside 3'-phosphate + H(+). It catalyses the reaction a 5'-end 5'-phospho-2'-deoxyribonucleotide in single-stranded DNA + H2O = a 5'-end 5'-dephospho-2'-deoxyribonucleotide in single-stranded DNA + phosphate. It carries out the reaction a 3-lyso-sn-glycero-1-phospho-(3'-acyl-1'-sn-glycerol) + a 1-acyl-sn-glycerol = a 3-acyl-sn-glycero-1-phospho-(3'-acyl-1'-sn-glycerol) + glycerol. The catalysed reaction is 3-lyso-sn-glycero-1-phospho-(3'-(9Z-octadecenoyl)-1'-sn-glycerol) + 1-(9Z-octadecenoyl)-sn-glycerol = 3-(9Z-octadecenoyl)-sn-glycero-1-phospho-(3'-(9Z-octadecenoyl)-1'-sn-glycerol) + glycerol. Its activity is regulated as follows. The exonuclease activity toward ssDNA substrate is Ca(2+) and Mg(2+)-independent, but it is inhibited by Fe(2+), Cu(2+) and to a lesser extent Zn(2+) ions. Its function is as follows. 5'-&gt;3' exonuclease that hydrolyzes the phosphodiester bond of single-stranded DNA (ssDNA) and RNA molecules to form nucleoside 3'-monophosphates and 5'-end 5'-hydroxy deoxyribonucleotide/ribonucleotide fragments. Partially redundant with PLD4, can cleave all four nucleotides displaying higher efficiency for ssDNA and RNA fragments initiated with uridine and guanosine residues and lower efficiency for cytidine-initiated substrates. As a result, it does not always degrade polynucleotides to the single nucleotide level, it can stall at specific sites sparing certain fragments from exonucleolytic degradation. Processes self and pathogenic ssDNA and RNA molecules that reach the endolysosomal compartment via phagocytosis or autophagy and may serve as 'danger' signals for recognition by innate immune receptors such as toll-like receptors (TLRs). Degrades mitochondrial CpG-rich ssDNA fragments to prevent TLR9 activation and autoinflammatory response, but it can cleave viral RNA to generate ligands for TLR7 activation and initiate antiviral immune responses. In plasmacytoid dendritic cells, it cooperates with endonuclease RNASET2 to release 2',3'-cyclic guanosine monophosphate (2',3'-cGMP), a potent stimulatory ligand for TLR7. Produces 2',3'-cGMPs and cytidine-rich RNA fragments that occupy TLR7 ligand-binding pockets and trigger a signaling-competent state. Can exert polynucleotide phosphatase activity toward 5'-phosphorylated ssDNA substrates although at a slow rate. Transphosphatidylase that catalyzes the exchange with R to S stereo-inversion of the glycerol moiety between (S,R)-lysophosphatidylglycerol (LPG) and monoacylglycerol (MAG) substrates to yield (S,S)-bis(monoacylglycero)phosphate (BMP). Can synthesize a variety of (S,S)-BMPs representing the main phospholipid constituent of lysosomal intralumenal vesicle (ILV) membranes that bind acid hydrolases for lipid degradation. Regulates the homeostasis and interorganellar communication of the endolysosomal system with an overall impact on cellular removal of dysfunctional organelles via autophagy as well as proper protein and lipid turnover. May play a role in myotube formation in response to ER stress. This chain is 5'-3' exonuclease PLD4, found in Mus musculus (Mouse).